The primary structure comprises 230 residues: MPHHIVIVEDEPVTQARLQSYFTQEGYTVSVTASGAGLREIMQNQPVDLILLDINLPDENGLMLTRALRERSTVGIILVTGRSDRIDRIVGLEMGADDYVTKPLELRELVVRVKNLLWRIDLARQAQPYTQDNCYRFAGYCLNVSRHTLERDGEPIKLTRAEYEMLVAFVTNPGEILSRERLLRMLSARRVENPDLRTVDVLIRRLRHKLSADLLVTQHGEGYFLAADVC.

The region spanning 4 to 117 is the Response regulatory domain; the sequence is HIVIVEDEPV…ELVVRVKNLL (114 aa). 4-aspartylphosphate is present on Asp-53. The segment at residues 132–227 is a DNA-binding region (ompR/PhoB-type); that stretch reads DNCYRFAGYC…QHGEGYFLAA (96 aa).

In terms of processing, phosphorylated and dephosphorylated by TorS.

Its subcellular location is the cytoplasm. Its function is as follows. Member of the two-component regulatory system TorS/TorR involved in the anaerobic utilization of trimethylamine-N-oxide (TMAO). Phosphorylated TorR activates the transcription of the torCAD operon by binding to four decameric boxes located in the torCAD promoter. Box1, 2 and 4 contain the DNA sequence 5'-CTGTTCATAT-3' and box3 contains the DNA sequence 5'-CCGTTCATCC-3'. Phosphorylated as well as unphosphorylated TorR negatively regulates its own expression by binding to box1 and 2. This is TorCAD operon transcriptional regulatory protein TorR (torR) from Escherichia coli O157:H7.